A 223-amino-acid polypeptide reads, in one-letter code: Small ribosomal subunit protein uS3 (223 aa).

The region spanning 39–117 (IREHLRKKPS…RPELNAKLVA (79 aa)) is the KH type-2 domain.

The protein belongs to the universal ribosomal protein uS3 family. Part of the 30S ribosomal subunit. Forms a tight complex with proteins S10 and S14.

Functionally, binds the lower part of the 30S subunit head. Binds mRNA in the 70S ribosome, positioning it for translation. In Chlamydia felis (strain Fe/C-56) (Chlamydophila felis), this protein is Small ribosomal subunit protein uS3.